The chain runs to 446 residues: Phosphoglucosamine mutase (446 aa).

Serine 102 functions as the Phosphoserine intermediate in the catalytic mechanism. Mg(2+) is bound by residues serine 102, aspartate 241, aspartate 243, and aspartate 245. Serine 102 is modified (phosphoserine).

The protein belongs to the phosphohexose mutase family. Mg(2+) is required as a cofactor. Post-translationally, activated by phosphorylation.

It catalyses the reaction alpha-D-glucosamine 1-phosphate = D-glucosamine 6-phosphate. Its function is as follows. Catalyzes the conversion of glucosamine-6-phosphate to glucosamine-1-phosphate. The protein is Phosphoglucosamine mutase of Xylella fastidiosa (strain M12).